A 315-amino-acid polypeptide reads, in one-letter code: tRNA-dihydrouridine(16) synthase (315 aa).

FMN is bound by residues 7–9 and glutamine 68; that span reads PME. Cysteine 98 functions as the Proton donor in the catalytic mechanism. FMN is bound by residues lysine 139, 200–202, and 224–225; these read NGE and GR.

It belongs to the Dus family. DusC subfamily. Requires FMN as cofactor.

The catalysed reaction is 5,6-dihydrouridine(16) in tRNA + NADP(+) = uridine(16) in tRNA + NADPH + H(+). The enzyme catalyses 5,6-dihydrouridine(16) in tRNA + NAD(+) = uridine(16) in tRNA + NADH + H(+). Catalyzes the synthesis of 5,6-dihydrouridine (D), a modified base found in the D-loop of most tRNAs, via the reduction of the C5-C6 double bond in target uridines. Specifically modifies U16 in tRNAs. This Shigella flexneri protein is tRNA-dihydrouridine(16) synthase.